The following is a 185-amino-acid chain: Ribosome-recycling factor (185 aa).

The protein belongs to the RRF family.

It is found in the cytoplasm. Responsible for the release of ribosomes from messenger RNA at the termination of protein biosynthesis. May increase the efficiency of translation by recycling ribosomes from one round of translation to another. The sequence is that of Ribosome-recycling factor from Streptococcus equi subsp. equi (strain 4047).